The primary structure comprises 301 residues: Acetylglutamate kinase (301 aa).

Substrate contacts are provided by residues 68-69 (GG), R90, and N195.

Belongs to the acetylglutamate kinase family. ArgB subfamily.

Its subcellular location is the cytoplasm. The enzyme catalyses N-acetyl-L-glutamate + ATP = N-acetyl-L-glutamyl 5-phosphate + ADP. It functions in the pathway amino-acid biosynthesis; L-arginine biosynthesis; N(2)-acetyl-L-ornithine from L-glutamate: step 2/4. Functionally, catalyzes the ATP-dependent phosphorylation of N-acetyl-L-glutamate. This Pseudomonas entomophila (strain L48) protein is Acetylglutamate kinase.